Reading from the N-terminus, the 369-residue chain is S-(hydroxymethyl)glutathione dehydrogenase (369 aa).

7 residues coordinate Zn(2+): C40, H62, C92, C95, C98, C106, and C169.

The protein belongs to the zinc-containing alcohol dehydrogenase family. Class-III subfamily. As to quaternary structure, homodimer. It depends on Zn(2+) as a cofactor.

Its subcellular location is the cytoplasm. The enzyme catalyses S-(hydroxymethyl)glutathione + NADP(+) = S-formylglutathione + NADPH + H(+). It catalyses the reaction S-(hydroxymethyl)glutathione + NAD(+) = S-formylglutathione + NADH + H(+). It carries out the reaction a primary alcohol + NAD(+) = an aldehyde + NADH + H(+). The catalysed reaction is a secondary alcohol + NAD(+) = a ketone + NADH + H(+). The enzyme catalyses S-nitrosoglutathione + NADH + H(+) = S-(hydroxysulfenamide)glutathione + NAD(+). In terms of biological role, has high formaldehyde dehydrogenase activity in the presence of glutathione and catalyzes the oxidation of normal alcohols in a reaction that is not GSH-dependent. In addition, hemithiolacetals other than those formed from GSH, including omega-thiol fatty acids, also are substrates. Also acts as a S-nitroso-glutathione reductase by catalyzing the NADH-dependent reduction of S-nitrosoglutathione. In Escherichia coli (strain SMS-3-5 / SECEC), this protein is S-(hydroxymethyl)glutathione dehydrogenase (frmA).